A 259-amino-acid polypeptide reads, in one-letter code: Virulence plasmid ParA family protein pGP5-D (259 aa).

9–16 (FKGGTGKT) is an ATP binding site.

This sequence belongs to the ParA family.

This is Virulence plasmid ParA family protein pGP5-D from Chlamydia psittaci (Chlamydophila psittaci).